Consider the following 1372-residue polypeptide: Cell fusion protein fus1 (1372 aa).

The 419-residue stretch at Leu-104–Ser-522 folds into the GBD/FH3 domain. An SH3-binding motif is present at residues Pro-802–Pro-817. Residues Pro-868–Ala-1278 enclose the FH2 domain.

Belongs to the formin homology family. BNI1 subfamily. Interacts with actin at the FH2 domain.

Its subcellular location is the cytoplasm. Functionally, required for cell fusion. It associates with the pre-zygotic projection tips in conjugating cells. This chain is Cell fusion protein fus1 (fus1), found in Schizosaccharomyces pombe (strain 972 / ATCC 24843) (Fission yeast).